A 143-amino-acid polypeptide reads, in one-letter code: Large ribosomal subunit protein uL15 (143 aa).

A disordered region spans residues 1-51 (MRLNSIAPAPGSRPSAKRVGRGIGSGLGKTAGRGHKGQKARAGGYHKVGFE). Residues 21–31 (RGIGSGLGKTA) are compositionally biased toward gly residues.

Belongs to the universal ribosomal protein uL15 family. Part of the 50S ribosomal subunit.

Its function is as follows. Binds to the 23S rRNA. This chain is Large ribosomal subunit protein uL15, found in Thioalkalivibrio sulfidiphilus (strain HL-EbGR7).